We begin with the raw amino-acid sequence, 458 residues long: Tissue-resident T-cell transcription regulator protein ZNF683 (458 aa).

Disordered stretches follow at residues 84 to 109 (PQDLGEDASNMRHQPPSLYKASTDSE) and 249 to 275 (TLHSQVESRSSRDTRTPGQAGVAAPTR). C2H2-type zinc fingers lie at residues 301-323 (YECNVCGKNFGQLSNLKVHLRVH), 329-351 (FQCALCQKRFTQLAHLQKHHLVH), and 357-379 (HQCQVCHKRFSSSSNLKTHLRLH).

The protein belongs to the krueppel C2H2-type zinc-finger protein family. As to expression, expressed in tissue-resident memory T (Trm) cell population in non-lymphoid organs, such as skin and gut. Expressed in innate lymphocytes, including tissue-resident natural killer (trNK) and natural killer T (NKT) cells in thymus, spleen and liver.

It localises to the nucleus. Transcription factor that mediates a transcriptional program in various innate and adaptive immune tissue-resident lymphocyte T-cell types such as tissue-resident memory T (Trm), natural killer (trNK) and natural killer T (NKT) cells and negatively regulates gene expression of proteins that promote the egress of tissue-resident T-cell populations from non-lymphoid organs. Plays a role in the development, retention and long-term establishment of adaptive and innate tissue-resident lymphocyte T-cell types in non-lymphoid organs, such as the skin and gut, but also in other nonbarrier tissues like liver and kidney, and therefore may provide immediate immunological protection against reactivating infections or viral reinfection. Also plays a role in the differentiation of both thymic and peripheral NKT cells. Negatively regulates the accumulation of interferon-gamma (IFN-gamma) in NKT cells at steady state or after antigenic stimulation. Positively regulates granzyme B production in NKT cells after innate stimulation. Associates with the transcriptional repressor PRDM1/BLIMP1 to chromatin at gene promoter regions. In Mus musculus (Mouse), this protein is Tissue-resident T-cell transcription regulator protein ZNF683.